Consider the following 413-residue polypeptide: 1-deoxy-D-xylulose 5-phosphate reductoisomerase (413 aa).

Positions 21, 22, 23, 24, 47, and 127 each coordinate NADPH. Lys-128 lines the 1-deoxy-D-xylulose 5-phosphate pocket. Glu-129 is a binding site for NADPH. Mn(2+) is bound at residue Asp-151. Residues Ser-152, Glu-153, Ser-177, and His-200 each coordinate 1-deoxy-D-xylulose 5-phosphate. Position 153 (Glu-153) interacts with Mn(2+). Gly-206 lines the NADPH pocket. 1-deoxy-D-xylulose 5-phosphate is bound by residues Ser-213, Asn-218, Lys-219, and Glu-222. Glu-222 is a Mn(2+) binding site.

It belongs to the DXR family. Mg(2+) serves as cofactor. Mn(2+) is required as a cofactor.

It carries out the reaction 2-C-methyl-D-erythritol 4-phosphate + NADP(+) = 1-deoxy-D-xylulose 5-phosphate + NADPH + H(+). It functions in the pathway isoprenoid biosynthesis; isopentenyl diphosphate biosynthesis via DXP pathway; isopentenyl diphosphate from 1-deoxy-D-xylulose 5-phosphate: step 1/6. Its function is as follows. Catalyzes the NADPH-dependent rearrangement and reduction of 1-deoxy-D-xylulose-5-phosphate (DXP) to 2-C-methyl-D-erythritol 4-phosphate (MEP). The sequence is that of 1-deoxy-D-xylulose 5-phosphate reductoisomerase from Mycobacterium bovis (strain ATCC BAA-935 / AF2122/97).